We begin with the raw amino-acid sequence, 178 residues long: ATP synthase subunit delta (178 aa).

Belongs to the ATPase delta chain family. As to quaternary structure, F-type ATPases have 2 components, F(1) - the catalytic core - and F(0) - the membrane proton channel. F(1) has five subunits: alpha(3), beta(3), gamma(1), delta(1), epsilon(1). F(0) has three main subunits: a(1), b(2) and c(10-14). The alpha and beta chains form an alternating ring which encloses part of the gamma chain. F(1) is attached to F(0) by a central stalk formed by the gamma and epsilon chains, while a peripheral stalk is formed by the delta and b chains.

Its subcellular location is the cell membrane. In terms of biological role, f(1)F(0) ATP synthase produces ATP from ADP in the presence of a proton or sodium gradient. F-type ATPases consist of two structural domains, F(1) containing the extramembraneous catalytic core and F(0) containing the membrane proton channel, linked together by a central stalk and a peripheral stalk. During catalysis, ATP synthesis in the catalytic domain of F(1) is coupled via a rotary mechanism of the central stalk subunits to proton translocation. Functionally, this protein is part of the stalk that links CF(0) to CF(1). It either transmits conformational changes from CF(0) to CF(1) or is implicated in proton conduction. The polypeptide is ATP synthase subunit delta (Streptococcus pyogenes serotype M4 (strain MGAS10750)).